Here is a 300-residue protein sequence, read N- to C-terminus: Cation-efflux pump FieF (300 aa).

4 consecutive transmembrane segments (helical) span residues 11–31, 40–60, 81–101, and 114–134; these read LAAVSATAVALVLFVMKVFAW, LASLVDSLVDIAASLVNLLVV, LAALAQSMFISGSALFLILTG, and PEVGMWVTLIALVATLLLVSF. Zn(2+) contacts are provided by D45 and D49. Zn(2+)-binding residues include H153 and D157. 2 consecutive transmembrane segments (helical) span residues 156–176 and 182–202; these read SDLLMNGAILVALALSWKGIT and FALGIGVYILYSALRMGYDAV.

It belongs to the cation diffusion facilitator (CDF) transporter (TC 2.A.4) family. FieF subfamily. Homodimer.

The protein localises to the cell inner membrane. The enzyme catalyses Zn(2+)(in) + H(+)(out) = Zn(2+)(out) + H(+)(in). It catalyses the reaction Cd(2+)(in) + H(+)(out) = Cd(2+)(out) + H(+)(in). The catalysed reaction is Fe(2+)(in) + H(+)(out) = Fe(2+)(out) + H(+)(in). Divalent metal cation transporter which exports Zn(2+), Cd(2+) and possibly Fe(2+). May be involved in zinc and iron detoxification by efflux. In Pectobacterium atrosepticum (strain SCRI 1043 / ATCC BAA-672) (Erwinia carotovora subsp. atroseptica), this protein is Cation-efflux pump FieF.